Consider the following 380-residue polypeptide: Glucose-1-phosphate adenylyltransferase (380 aa).

Alpha-D-glucose 1-phosphate is bound by residues Gly-164, 179-180 (EK), and Ser-190.

Belongs to the bacterial/plant glucose-1-phosphate adenylyltransferase family. Homotetramer.

It catalyses the reaction alpha-D-glucose 1-phosphate + ATP + H(+) = ADP-alpha-D-glucose + diphosphate. The protein operates within glycan biosynthesis; glycogen biosynthesis. Its function is as follows. Involved in the biosynthesis of ADP-glucose, a building block required for the elongation reactions to produce glycogen. Catalyzes the reaction between ATP and alpha-D-glucose 1-phosphate (G1P) to produce pyrophosphate and ADP-Glc. This Streptococcus pneumoniae serotype 2 (strain D39 / NCTC 7466) protein is Glucose-1-phosphate adenylyltransferase.